Reading from the N-terminus, the 1556-residue chain is Ferredoxin-dependent glutamate synthase 2 (1556 aa).

The For GATase activity role is filled by Cys-37. Positions 37-431 constitute a Glutamine amidotransferase type-2 domain; the sequence is CGVGFIANLR…PGQMIAVDLA (395 aa). [3Fe-4S] cluster contacts are provided by Cys-1173, Cys-1179, and Cys-1184. A disordered region spans residues 1533–1556; that stretch reads PSEKDSPEANGDVSLTGEKTLTSV.

The protein belongs to the glutamate synthase family. Requires [3Fe-4S] cluster as cofactor. The cofactor is FAD. It depends on FMN as a cofactor.

It carries out the reaction 2 oxidized [2Fe-2S]-[ferredoxin] + 2 L-glutamate = L-glutamine + 2 reduced [2Fe-2S]-[ferredoxin] + 2-oxoglutarate + 2 H(+). It functions in the pathway amino-acid biosynthesis; L-glutamate biosynthesis via GLT pathway; L-glutamate from 2-oxoglutarate and L-glutamine (ferredoxin route): step 1/1. It participates in energy metabolism; nitrogen metabolism. This Synechocystis sp. (strain ATCC 27184 / PCC 6803 / Kazusa) protein is Ferredoxin-dependent glutamate synthase 2 (gltS).